The chain runs to 291 residues: MTQVLKFGIPKGSLQDATIALFKRCGWKINVNGRSYFPDINDPDISCALLRAQEMARNVEHGTLDAGLTGKDWIAENNSDVHVVADLVYSKASARPARWVIAVAKDSPIQKLEDLEGKTVSTELVNYTKRFFQEKKISVNVEFSWGATEAKVVSGLADAIVEITETESTIRAHSLRIIHEMMQTHTQLIANHDAWKDPFKKAKLEQIALLLKGALLGEKLVGLKMNVPHAGLDAIVNLLPSLNAPTVAPLYQSDWFAVETVVDSETVRDLIPELMAKGAQGIIEYPLNKVI.

It belongs to the ATP phosphoribosyltransferase family. Long subfamily. Mg(2+) serves as cofactor.

It localises to the cytoplasm. It carries out the reaction 1-(5-phospho-beta-D-ribosyl)-ATP + diphosphate = 5-phospho-alpha-D-ribose 1-diphosphate + ATP. Its pathway is amino-acid biosynthesis; L-histidine biosynthesis; L-histidine from 5-phospho-alpha-D-ribose 1-diphosphate: step 1/9. Feedback inhibited by histidine. Its function is as follows. Catalyzes the condensation of ATP and 5-phosphoribose 1-diphosphate to form N'-(5'-phosphoribosyl)-ATP (PR-ATP). Has a crucial role in the pathway because the rate of histidine biosynthesis seems to be controlled primarily by regulation of HisG enzymatic activity. The chain is ATP phosphoribosyltransferase from Desulfosudis oleivorans (strain DSM 6200 / JCM 39069 / Hxd3) (Desulfococcus oleovorans).